A 152-amino-acid chain; its full sequence is Superoxide dismutase [Cu-Zn] (152 aa).

Cu cation is bound by residues His-45, His-47, and His-62. A disordered region spans residues 61-87 (PHFNPAGKEHGAPEDENRHAGDLGNAT). Zn(2+) is bound by residues His-62, His-70, His-79, and Asp-82. Positions 67–81 (GKEHGAPEDENRHAG) are enriched in basic and acidic residues. His-119 is a Cu cation binding site.

Belongs to the Cu-Zn superoxide dismutase family. As to quaternary structure, homodimer. It depends on Cu cation as a cofactor. Zn(2+) serves as cofactor.

The protein localises to the cytoplasm. The enzyme catalyses 2 superoxide + 2 H(+) = H2O2 + O2. In terms of biological role, destroys radicals which are normally produced within the cells and which are toxic to biological systems. In Zingiber officinale (Ginger), this protein is Superoxide dismutase [Cu-Zn].